The chain runs to 257 residues: Short chain dehydrogenase prhI (257 aa).

The chain crosses the membrane as a helical span at residues 7–29; that stretch reads HVVIITGSSSGIGLAASTLALAS. I11 is an NADP(+) binding site. The N-linked (GlcNAc...) asparagine glycan is linked to N50. D57 contacts NADP(+). N-linked (GlcNAc...) asparagine glycans are attached at residues N92 and N110. 4 residues coordinate NADP(+): R119, Y151, K155, and V184. Catalysis depends on Y151, which acts as the Proton acceptor. K155 functions as the Lowers pKa of active site Tyr in the catalytic mechanism.

Belongs to the short-chain dehydrogenases/reductases (SDR) family.

The protein resides in the membrane. It catalyses the reaction protoaustinoid A + A = protoaustinoid B + AH2. It participates in secondary metabolite biosynthesis; terpenoid biosynthesis. In terms of biological role, short chain dehydrogenase; part of the gene cluster that mediates the biosynthesis of paraherquonin, a meroterpenoid with a unique, highly congested hexacyclic molecular architecture. The first step of the pathway is the synthesis of 3,5-dimethylorsellinic acid (DMOA) by the polyketide synthase prhL. Synthesis of DMOA is followed by farnesylation by the prenyltransferase prhE, methylesterification by the methyl-transferase prhM, epoxidation of the prenyl chain by the flavin-dependent monooxygenase prhF, and cyclization of the farnesyl moiety by the terpene cyclase prhH, to yield the tetracyclic intermediate, protoaustinoid A. The short chain dehydrogenase prhI then oxidizes the C-3 alcohol group of the terpene cyclase product to transform protoaustinoid A into protoaustinoid B. The FAD-binding monooxygenase prhJ catalyzes the oxidation of protoaustinoid B into preaustinoid A which is further oxidized into preaustinoid A1 by FAD-binding monooxygenase phrK. Finally, prhA leads to berkeleydione via the berkeleyone B intermediate. PrhA is a multifunctional dioxygenase that first desaturates at C5-C6 to form berkeleyone B, followed by rearrangement of the A/B-ring to form the cycloheptadiene moiety in berkeleydione. Berkeleydione serves as the key intermediate for the biosynthesis of paraherquonin as well as many other meroterpenoids. The cytochrome P450 monooxygenases prhB, prhD, and prhN, as well as the isomerase prhC, are probably involved in the late stage of paraherquonin biosynthesis, after the production of berkeleydione. Especially prhC might be a multifunctional enzyme that catalyzes the D-ring expansion via intramolecular methoxy rearrangement, as well as the hydrolysis of the expanded D-ring. This Penicillium brasilianum protein is Short chain dehydrogenase prhI.